A 161-amino-acid polypeptide reads, in one-letter code: Crossover junction endodeoxyribonuclease RuvC (161 aa).

Residues aspartate 9, glutamate 69, and histidine 144 contribute to the active site. Mg(2+)-binding residues include aspartate 9, glutamate 69, and histidine 144.

The protein belongs to the RuvC family. In terms of assembly, homodimer which binds Holliday junction (HJ) DNA. The HJ becomes 2-fold symmetrical on binding to RuvC with unstacked arms; it has a different conformation from HJ DNA in complex with RuvA. In the full resolvosome a probable DNA-RuvA(4)-RuvB(12)-RuvC(2) complex forms which resolves the HJ. Mg(2+) is required as a cofactor.

The protein localises to the cytoplasm. The catalysed reaction is Endonucleolytic cleavage at a junction such as a reciprocal single-stranded crossover between two homologous DNA duplexes (Holliday junction).. In terms of biological role, the RuvA-RuvB-RuvC complex processes Holliday junction (HJ) DNA during genetic recombination and DNA repair. Endonuclease that resolves HJ intermediates. Cleaves cruciform DNA by making single-stranded nicks across the HJ at symmetrical positions within the homologous arms, yielding a 5'-phosphate and a 3'-hydroxyl group; requires a central core of homology in the junction. The consensus cleavage sequence is 5'-(A/T)TT(C/G)-3'. Cleavage occurs on the 3'-side of the TT dinucleotide at the point of strand exchange. HJ branch migration catalyzed by RuvA-RuvB allows RuvC to scan DNA until it finds its consensus sequence, where it cleaves and resolves the cruciform DNA. In Borrelia turicatae (strain 91E135), this protein is Crossover junction endodeoxyribonuclease RuvC.